Here is a 455-residue protein sequence, read N- to C-terminus: RQC trigger complex subunit RQT4 homolog (455 aa).

2 disordered regions span residues 64 to 98 and 118 to 148; these read STHSGNSPSIMKNKKNVTPNNNIRQKNTATSSHPS and PASRNKSQSNNISSHEKSSKTTKNVSPGVMT. Polar residues-rich tracts occupy residues 65-98 and 119-130; these read THSGNSPSIMKNKKNVTPNNNIRQKNTATSSHPS and ASRNKSQSNNIS. Position 70 is a phosphoserine (Ser-70). Ser-380 is subject to Phosphoserine.

In terms of assembly, component of the RQT (ribosome quality control trigger) complex.

It is found in the cytoplasm. Its subcellular location is the cytosol. Functionally, probably functions as part of the RQC trigger (RQT) complex that activates the ribosome quality control (RQC) pathway, a pathway that degrades nascent peptide chains during problematic translation. This chain is RQC trigger complex subunit RQT4 homolog, found in Schizosaccharomyces pombe (strain 972 / ATCC 24843) (Fission yeast).